Reading from the N-terminus, the 597-residue chain is Blastula protease 10 (597 aa).

The first 16 residues, 1-16, serve as a signal peptide directing secretion; sequence MKLILFLSGLVSLVLC. Positions 17–93 are cleaved as a propeptide — activation peptide; sequence TLAAPTGDQK…DEMTGRKKRK (77 aa). The segment at 24 to 67 is disordered; sequence DQKEIHTETPPPKKPSETTTPGALKTPQPEPKDEEPTPGAFQGD. Residues 93-294 enclose the Peptidase M12A domain; sequence KATIYESQRW…ELANLIYECD (202 aa). 9 disulfide bridges follow: C134–C293, C162–C182, C299–C315, C305–C317, C319–C328, C339–C365, C392–C412, C484–C510, and C537–C557. H190 contributes to the Zn(2+) binding site. Residue E191 is part of the active site. 2 residues coordinate Zn(2+): H194 and H200. The 35-residue stretch at 295–329 folds into the EGF-like domain; the sequence is DIEDCAGANECLNGGYHDTECNCVCPSGYNGDLCE. CUB domains follow at residues 339–449 and 484–595; these read CSER…YRIV and CGGS…YRAI.

Zn(2+) is required as a cofactor.

Its subcellular location is the cytoplasm. The protein resides in the perinuclear region. It is found in the cell cortex. The protein localises to the secreted. It localises to the extracellular space. Could be involved in the differentiation of ectodermal lineages and subsequent patterning of the embryo. This chain is Blastula protease 10 (BP10), found in Paracentrotus lividus (Common sea urchin).